The primary structure comprises 324 residues: Elongation factor P--(R)-beta-lysine ligase (324 aa).

75–77 is a substrate binding site; sequence SPE. ATP contacts are provided by residues 99–101 and Asn108; that span reads RNK. Tyr117 contacts substrate. An ATP-binding site is contributed by 243–244; it reads EL. Residue Glu250 participates in substrate binding. Residue Gly299 participates in ATP binding.

Belongs to the class-II aminoacyl-tRNA synthetase family. EpmA subfamily. In terms of assembly, homodimer.

It catalyses the reaction D-beta-lysine + L-lysyl-[protein] + ATP = N(6)-((3R)-3,6-diaminohexanoyl)-L-lysyl-[protein] + AMP + diphosphate + H(+). In terms of biological role, with EpmB is involved in the beta-lysylation step of the post-translational modification of translation elongation factor P (EF-P). Catalyzes the ATP-dependent activation of (R)-beta-lysine produced by EpmB, forming a lysyl-adenylate, from which the beta-lysyl moiety is then transferred to the epsilon-amino group of a conserved specific lysine residue in EF-P. This chain is Elongation factor P--(R)-beta-lysine ligase, found in Buchnera aphidicola subsp. Acyrthosiphon pisum (strain APS) (Acyrthosiphon pisum symbiotic bacterium).